The chain runs to 213 residues: Uracil phosphoribosyltransferase (213 aa).

5-phospho-alpha-D-ribose 1-diphosphate contacts are provided by residues arginine 78, arginine 103, and 130–138 (DPMLATGGS). Residues isoleucine 197 and 202–204 (GDA) contribute to the uracil site. Position 203 (aspartate 203) interacts with 5-phospho-alpha-D-ribose 1-diphosphate.

It belongs to the UPRTase family. Mg(2+) is required as a cofactor.

It carries out the reaction UMP + diphosphate = 5-phospho-alpha-D-ribose 1-diphosphate + uracil. The protein operates within pyrimidine metabolism; UMP biosynthesis via salvage pathway; UMP from uracil: step 1/1. Its activity is regulated as follows. Allosterically activated by GTP. In terms of biological role, catalyzes the conversion of uracil and 5-phospho-alpha-D-ribose 1-diphosphate (PRPP) to UMP and diphosphate. The sequence is that of Uracil phosphoribosyltransferase from Cutibacterium acnes (strain DSM 16379 / KPA171202) (Propionibacterium acnes).